The chain runs to 859 residues: MVSIAFYGGIPGGISTPITQQSEKSKCEENTMFQPYCYNNDSKNSMAESKEARDQEMNLKEESKEEKRRNDWWKIGMFLLCLAGTTGGILWWYEGLPQQHYIGLVAIGGRLNGSGQSNAIECWGSFPGCRPFQNYFSYETNRSIHMNNNTATLLEAYHREITFIYKSSCTDSDHCQEYQCKKVNLNSSDSSNSVRVEDVTNTAEYWGFKWLECNQTENFKTILVPENEMVNINDTDTWIPKGCNETWARVKRCPIDILYGIHPIRLCVQPPFFLVQEKGIADTSRIGNCGPTIFLGVLEDNKGVVRGDYTACNVRRLNINRKDYTGMYQVPIFYTCTFTNITSCNSEPIISVIMYETNQVQYLLCNNNNSNNYNCVVQSFGVIGQAHLELPRPNKRIRNQSFNQYNCSINNKTELETWKLVNTSGITPLPISSEANTGLIRHKRDFGISAIVAAIVAATAIARSATMSYVALTEVNKIMEVQNHTFEVENSTLNGMDLIERQIKILYAMILQTHADVQLLKERQQVEETFNLIGCIERTHVFCHTGHPWNMSWGHLNESTQWDDWVSKMEDLNQEILTTLHGARNNLAQSMITFNTPDSIAQFGKDLWSHIGNWIPGLGASIIKYIVMFLLIYLLLTSSPKILRALWKVTSGAGSSGGRYLKKKFHHKHASREDTWDQAQHNIHLAGVTGGSGDKYYKQKYSRNDWNGESEEYNRRPKSWVKSIEAFGESYISEKTKGEISQPGAAINEHKNGSGGNNPHQGSLDLEIRSEGGNIYDCCIKAQEGTLAIPCCGFPLWLFWGLVIIVGRIAGYGLRGLAVIIRICIRGLNLIFEIIRKMLDYIGRALNPGTSHVSMPQYV.

The propeptide occupies 1–6 (MVSIAF). Topologically, residues 7–614 (YGGIPGGIST…KDLWSHIGNW (608 aa)) are extracellular. N-linked (GlcNAc...) asparagine; by host glycosylation is found at Asn40, Asn112, Asn141, Asn148, Asn186, Asn214, Asn233, Asn244, Asn340, Asn368, Asn399, Asn406, Asn411, and Asn422. Positions 446-466 (FGISAIVAAIVAATAIARSAT) are fusion peptide. Residues Asn483 and Asn490 are each glycosylated (N-linked (GlcNAc...) asparagine; by host). An immunosuppression region spans residues 498–513 (LIERQIKILYAMILQT). Asn550 and Asn557 each carry an N-linked (GlcNAc...) asparagine; by host glycan. 2 coiled-coil regions span residues 576–624 (ILTT…SIIK) and 663–699 (KKFHHKHASREDTWDQAQHNIHLAGVTGGSGDKYYKQ). A helical transmembrane segment spans residues 615-635 (IPGLGASIIKYIVMFLLIYLL). At 636–859 (LTSSPKILRA…TSHVSMPQYV (224 aa)) the chain is on the cytoplasmic side.

The mature envelope protein (Env) consists of a trimer of SU-TM heterodimers attached by noncovalent interactions or by a labile interchain disulfide bond. Post-translationally, specific enzymatic cleavages in vivo yield mature proteins. Envelope glycoproteins are synthesized as an inactive precursor that is N-glycosylated and processed likely by host cell furin or by a furin-like protease in the Golgi to yield the mature SU and TM proteins. The cleavage site between SU and TM requires the minimal sequence [KR]-X-[KR]-R.

The protein localises to the virion membrane. Its subcellular location is the host cell membrane. The surface protein (SU) attaches the virus to the host cell by binding to its receptor. This interaction triggers the refolding of the transmembrane protein (TM) and is thought to activate its fusogenic potential by unmasking its fusion peptide. Fusion occurs at the host cell plasma membrane. Functionally, the transmembrane protein (TM) acts as a class I viral fusion protein. Under the current model, the protein has at least 3 conformational states: pre-fusion native state, pre-hairpin intermediate state, and post-fusion hairpin state. During viral and target cell membrane fusion, the coiled coil regions (heptad repeats) assume a trimer-of-hairpins structure, positioning the fusion peptide in close proximity to the C-terminal region of the ectodomain. The formation of this structure appears to drive apposition and subsequent fusion of viral and target cell membranes. Membranes fusion leads to delivery of the nucleocapsid into the cytoplasm. This chain is Envelope glycoprotein (env), found in Equus asinus (Donkey).